A 1450-amino-acid chain; its full sequence is DNA-directed RNA polymerase RPB1 homolog (1450 aa).

It belongs to the RNA polymerase beta' chain family. Part of the viral DNA-directed RNA polymerase that consists of 8 polII-like subunits (RPB1, RPB2, RPB3, RPB5, RPB6, RPB7, RPB9, RPB10), a capping enzyme and a termination factor.

It is found in the virion. It carries out the reaction RNA(n) + a ribonucleoside 5'-triphosphate = RNA(n+1) + diphosphate. In terms of biological role, catalytic component of the DNA-directed RNA polymerase (RNAP) that catalyzes the transcription in the cytoplasm of viral DNA into RNA using the four ribonucleoside triphosphates as substrates. Forms the polymerase active center together with RPB2. Part of the core element with the central large cleft, the clamp element that moves to open and close the cleft and the jaws that are thought to grab the incoming DNA template. In African swine fever virus (isolate Warthog/Namibia/Wart80/1980) (ASFV), this protein is DNA-directed RNA polymerase RPB1 homolog.